The following is a 403-amino-acid chain: Aminomethyltransferase, mitochondrial (403 aa).

Residues 1-28 (MHRIVSVVAPLGFRLQAQPLVQSRPLSS) constitute a mitochondrion transit peptide. Residues Glu232 and Arg261 each coordinate substrate. Lys368 carries the N6-succinyllysine modification. Position 399 (Tyr399) interacts with substrate.

The protein belongs to the GcvT family. In terms of assembly, the glycine cleavage system is composed of four proteins: P, T, L and H.

Its subcellular location is the mitochondrion. The catalysed reaction is N(6)-[(R)-S(8)-aminomethyldihydrolipoyl]-L-lysyl-[protein] + (6S)-5,6,7,8-tetrahydrofolate = N(6)-[(R)-dihydrolipoyl]-L-lysyl-[protein] + (6R)-5,10-methylene-5,6,7,8-tetrahydrofolate + NH4(+). Its function is as follows. The glycine cleavage system catalyzes the degradation of glycine. This is Aminomethyltransferase, mitochondrial from Mus musculus (Mouse).